The primary structure comprises 525 residues: Putative ribose/galactose/methyl galactoside import ATP-binding protein (525 aa).

A disordered region spans residues 1 to 30; that stretch reads MFGSATANPPAQRDLPSSDSDSPTPDAQPP. Over residues 14–25 the composition is skewed to low complexity; it reads DLPSSDSDSPTP. 2 consecutive ABC transporter domains span residues 33–269 and 279–523; these read LEIS…VGRE and KPPG…SGHK. Position 65-72 (65-72) interacts with ATP; sequence GENGAGKS.

Belongs to the ABC transporter superfamily. Carbohydrate importer 2 (CUT2) (TC 3.A.1.2) family.

It is found in the cell inner membrane. It carries out the reaction D-ribose(out) + ATP + H2O = D-ribose(in) + ADP + phosphate + H(+). It catalyses the reaction D-galactose(out) + ATP + H2O = D-galactose(in) + ADP + phosphate + H(+). Functionally, part of an ABC transporter complex involved in carbohydrate import. Could be involved in ribose, galactose and/or methyl galactoside import. Responsible for energy coupling to the transport system. This chain is Putative ribose/galactose/methyl galactoside import ATP-binding protein, found in Pseudomonas savastanoi pv. phaseolicola (strain 1448A / Race 6) (Pseudomonas syringae pv. phaseolicola (strain 1448A / Race 6)).